The following is a 1128-amino-acid chain: Major DNA-binding protein (1128 aa).

The tract at residues 1104–1128 is required for nuclear localization; it reads LGGGGQGSGGRRKRRLATVLPGLEV.

It belongs to the herpesviridae major DNA-binding protein family. In terms of assembly, homooligomers. Forms double-helical filaments necessary for the formation of replication compartments within the host nucleus. Interacts with the origin-binding protein. Interacts with the helicase primase complex; this interaction stimulates primer synthesis activity of the helicase-primase complex. Interacts with the DNA polymerase. Interacts with the alkaline exonuclease; this interaction increases its nuclease processivity.

It localises to the virion tegument. It is found in the host nucleus. Plays several crucial roles in viral infection. Participates in the opening of the viral DNA origin to initiate replication by interacting with the origin-binding protein. May disrupt loops, hairpins and other secondary structures present on ssDNA to reduce and eliminate pausing of viral DNA polymerase at specific sites during elongation. Promotes viral DNA recombination by performing strand-transfer, characterized by the ability to transfer a DNA strand from a linear duplex to a complementary single-stranded DNA circle. Can also catalyze the renaturation of complementary single strands. Additionally, reorganizes the host cell nucleus, leading to the formation of prereplicative sites and replication compartments. This process is driven by the protein which can form double-helical filaments in the absence of DNA. The polypeptide is Major DNA-binding protein (Homo sapiens (Human)).